The chain runs to 128 residues: Fluoride-specific ion channel FluC (128 aa).

The next 4 helical transmembrane spans lie at 5–25, 34–54, 67–87, and 99–119; these read LFIS…GLLF, FGTL…LGLF, FLIT…SEVV, and FCVL…GIWI. Na(+)-binding residues include Gly-74 and Thr-77.

Belongs to the fluoride channel Fluc/FEX (TC 1.A.43) family.

The protein resides in the cell inner membrane. It catalyses the reaction fluoride(in) = fluoride(out). With respect to regulation, na(+) is not transported, but it plays an essential structural role and its presence is essential for fluoride channel function. In terms of biological role, fluoride-specific ion channel. Important for reducing fluoride concentration in the cell, thus reducing its toxicity. The polypeptide is Fluoride-specific ion channel FluC (Haemophilus influenzae (strain PittGG)).